The chain runs to 365 residues: MLIYLFNWLSHYYKGLEVFSSYVSVRIIMISITSLLITLFLGRPMIRWLQKMQIGQVVRDDGPQSHFSKRNTPTMGGVLILSSVIISALLWGSLSSIYLWILILVVIFFGAIGFFDDYLKLVLKHPKGLRAKHKFALQSIFSIILAIVLFYLLSKNGQMNLSIPFTKNLHIPMGIFLFVVLTFFIINGSSNAVNLTDGLDGLAIVPVVLVAAGLGIYAYIQTNSVLANYLLFPYINNQGLAEVAVFCAALCGSGLAFLWFNSHPAEVFMGDVGSLTLGAVLGVIAVMIRQELIFFIMGLLFVVEALSVMLQVGSYKLRNGKRIFKMAPIHHHFELMGWPETKVVIRFWIVSLILFLIGLVAIKVR.

10 consecutive transmembrane segments (helical) span residues 22 to 42, 74 to 94, 95 to 115, 134 to 154, 169 to 189, 201 to 221, 240 to 260, 268 to 288, 292 to 312, and 342 to 362; these read YVSV…LFLG, TMGG…WGSL, SSIY…IGFF, KFAL…YLLS, LHIP…INGS, GLAI…AYIQ, LAEV…FLWF, FMGD…AVMI, LIFF…MLQV, and KVVI…LVAI.

The protein belongs to the glycosyltransferase 4 family. MraY subfamily. It depends on Mg(2+) as a cofactor.

It is found in the cell inner membrane. The catalysed reaction is UDP-N-acetyl-alpha-D-muramoyl-L-alanyl-gamma-D-glutamyl-meso-2,6-diaminopimeloyl-D-alanyl-D-alanine + di-trans,octa-cis-undecaprenyl phosphate = di-trans,octa-cis-undecaprenyl diphospho-N-acetyl-alpha-D-muramoyl-L-alanyl-D-glutamyl-meso-2,6-diaminopimeloyl-D-alanyl-D-alanine + UMP. Its pathway is cell wall biogenesis; peptidoglycan biosynthesis. Catalyzes the initial step of the lipid cycle reactions in the biosynthesis of the cell wall peptidoglycan: transfers peptidoglycan precursor phospho-MurNAc-pentapeptide from UDP-MurNAc-pentapeptide onto the lipid carrier undecaprenyl phosphate, yielding undecaprenyl-pyrophosphoryl-MurNAc-pentapeptide, known as lipid I. This is Phospho-N-acetylmuramoyl-pentapeptide-transferase from Francisella philomiragia subsp. philomiragia (strain ATCC 25017 / CCUG 19701 / FSC 153 / O#319-036).